A 167-amino-acid chain; its full sequence is UPF0262 protein Nwi_0248 (167 aa).

Belongs to the UPF0262 family.

The protein is UPF0262 protein Nwi_0248 of Nitrobacter winogradskyi (strain ATCC 25391 / DSM 10237 / CIP 104748 / NCIMB 11846 / Nb-255).